A 115-amino-acid polypeptide reads, in one-letter code: Non-specific lipid-transfer protein 4.1 (115 aa).

A signal peptide spans 1–25 (MARAAASQLVLVALVAAMLLVAADA). 4 disulfides stabilise this stretch: Cys29–Cys77, Cys39–Cys54, Cys55–Cys97, and Cys75–Cys111.

Belongs to the plant LTP family.

Plant non-specific lipid-transfer proteins transfer phospholipids as well as galactolipids across membranes. May play a role in wax or cutin deposition in the cell walls of expanding epidermal cells and certain secretory tissues. The protein is Non-specific lipid-transfer protein 4.1 (LTP4.1) of Hordeum vulgare (Barley).